The primary structure comprises 214 residues: Uridine kinase (214 aa).

15–22 (GASASGKS) contributes to the ATP binding site.

It belongs to the uridine kinase family.

Its subcellular location is the cytoplasm. It catalyses the reaction uridine + ATP = UMP + ADP + H(+). The enzyme catalyses cytidine + ATP = CMP + ADP + H(+). The protein operates within pyrimidine metabolism; CTP biosynthesis via salvage pathway; CTP from cytidine: step 1/3. It participates in pyrimidine metabolism; UMP biosynthesis via salvage pathway; UMP from uridine: step 1/1. The chain is Uridine kinase from Aeromonas salmonicida (strain A449).